A 249-amino-acid chain; its full sequence is UPF0309 protein GTNG_1302 (249 aa).

Residues 31–214 (VSKAVQNGGI…ALMAENGVEP (184 aa)) form the SIS domain.

It belongs to the UPF0309 family.

This is UPF0309 protein GTNG_1302 from Geobacillus thermodenitrificans (strain NG80-2).